The chain runs to 412 residues: Circumsporozoite protein (412 aa).

The signal sequence occupies residues 1-18 (MMRKLAILSVSSFLFVEA). Residues 69-328 (SRSLGENDDG…KNNNNEEPSD (260 aa)) form a disordered region. Basic and acidic residues predominate over residues 85-105 (NGREGKDEDKRDGNNEDNEKL). Residues 104-111 (KLRKPKHK) form a required for the binding to heparan sulfate proteoglycans (HSPGs) on the surface of host hepatocytes region. Positions 112-116 (KLKQP) are region I; contains the proteolytic cleavage site. Residues 120–288 (NPDPNANPNV…PNANPNANPN (169 aa)) are compositionally biased toward low complexity. 41 tandem repeats follow at residues 123-126 (PNAN), 127-130 (PNVD), 131-134 (PNAN), 135-138 (PNVD), 139-142 (PNAN), 143-146 (PNVD), 147-150 (PNAN), 151-154 (PNAN), 155-158 (PNAN), 159-162 (PNAN), 163-166 (PNAN), 167-170 (PNAN), 171-174 (PNAN), 175-178 (PNAN), 179-182 (PNAN), 183-186 (PNAN), 187-190 (PNAN), 191-194 (PNAN), 195-198 (PNAN), 199-202 (PNAN), 203-206 (PNAN), 207-210 (PNVD), 211-214 (PNAN), 215-218 (PNAN), 219-222 (PNAN), 223-226 (PNAN), 227-230 (PNAN), 231-234 (PNAN), 235-238 (PNAN), 239-242 (PNAN), 243-246 (PNAN), 247-250 (PNAN), 251-254 (PNAN), 255-258 (PNAN), 259-262 (PNAN), 263-266 (PNAN), 267-270 (PNAN), 271-274 (PNAN), 275-278 (PNAN), 279-282 (PNAN), and 283-286 (PNAN). A 41 X 4 AA tandem repeats of P-N-[AV]-[ND] region spans residues 123–286 (PNANPNVDPN…ANPNANPNAN (164 aa)). Positions 289–304 (KNNQGNGQGHNMPNDP) are enriched in polar residues. Low complexity predominate over residues 310-324 (ENANANNAVKNNNNE). Positions 337-390 (KIKNSISTEWSPCSVTCGNGIQVRIKPGSANKPKDELDYENDIEKKICKMEKCS) constitute a TSP type-1 domain. Disulfide bonds link Cys349/Cys384 and Cys353/Cys389. The O-linked (Fuc) threonine glycan is linked to Thr352. A lipid anchor (GPI-anchor amidated cysteine) is attached at Cys389. A propeptide spans 390-412 (SSVFNVVNSSIGLIMVLSFLFLN) (removed in mature form).

It belongs to the plasmodium circumsporozoite protein family. Post-translationally, during host cell invasion, proteolytically cleaved at the cell membrane in the region I by a papain-like cysteine protease of parasite origin. Cleavage is triggered by the sporozoite contact with highly sulfated heparan sulfate proteoglycans (HSPGs) present on the host hepatocyte cell surface. Cleavage exposes the TSP type-1 (TSR) domain and is required for productive invasion of host hepatocytes but not for adhesion to the host cell membrane. Cleavage is dispensable for sporozoite development in the oocyst, motility and for traversal of host and vector cells. O-glycosylated; maybe by POFUT2.

Its subcellular location is the cell membrane. It is found in the cytoplasm. In terms of biological role, essential sporozoite protein. In the mosquito vector, required for sporozoite development in the oocyst, migration through the vector hemolymph and entry into the vector salivary glands. In the vertebrate host, required for sporozoite migration through the host dermis and infection of host hepatocytes. Binds to highly sulfated heparan sulfate proteoglycans (HSPGs) on the surface of host hepatocytes. Functionally, in the vertebrate host, binds to highly sulfated heparan sulfate proteoglycans (HSPGs) on the surface of host hepatocytes and is required for sporozoite invasion of the host hepatocytes. The sequence is that of Circumsporozoite protein from Plasmodium falciparum.